A 555-amino-acid chain; its full sequence is 2-succinyl-5-enolpyruvyl-6-hydroxy-3-cyclohexene-1-carboxylate synthase (555 aa).

It belongs to the TPP enzyme family. MenD subfamily. In terms of assembly, homodimer. The cofactor is Mg(2+). Mn(2+) serves as cofactor. It depends on thiamine diphosphate as a cofactor.

It catalyses the reaction isochorismate + 2-oxoglutarate + H(+) = 5-enolpyruvoyl-6-hydroxy-2-succinyl-cyclohex-3-ene-1-carboxylate + CO2. It functions in the pathway quinol/quinone metabolism; 1,4-dihydroxy-2-naphthoate biosynthesis; 1,4-dihydroxy-2-naphthoate from chorismate: step 2/7. Its pathway is quinol/quinone metabolism; menaquinone biosynthesis. In terms of biological role, catalyzes the thiamine diphosphate-dependent decarboxylation of 2-oxoglutarate and the subsequent addition of the resulting succinic semialdehyde-thiamine pyrophosphate anion to isochorismate to yield 2-succinyl-5-enolpyruvyl-6-hydroxy-3-cyclohexene-1-carboxylate (SEPHCHC). The chain is 2-succinyl-5-enolpyruvyl-6-hydroxy-3-cyclohexene-1-carboxylate synthase from Bacteroides fragilis (strain ATCC 25285 / DSM 2151 / CCUG 4856 / JCM 11019 / LMG 10263 / NCTC 9343 / Onslow / VPI 2553 / EN-2).